Consider the following 156-residue polypeptide: Small ribosomal subunit protein uS7 (156 aa).

This sequence belongs to the universal ribosomal protein uS7 family. In terms of assembly, part of the 30S ribosomal subunit. Contacts proteins S9 and S11.

In terms of biological role, one of the primary rRNA binding proteins, it binds directly to 16S rRNA where it nucleates assembly of the head domain of the 30S subunit. Is located at the subunit interface close to the decoding center, probably blocks exit of the E-site tRNA. In Bartonella tribocorum (strain CIP 105476 / IBS 506), this protein is Small ribosomal subunit protein uS7.